Here is a 366-residue protein sequence, read N- to C-terminus: MSADFLALAVPGVQKLSPYVTGKPIDELARELGIEPARIVKLASNENPLGPNPRVLEAVRGELSELTRYPDGSGFRLKAKLAERFGLKSEQITLGNGSNDIIDLVARCCGAGPNAVFSAHAFAAYPLCTQAAGAESRVVPAVDYGHDLDGMLKAIDEQTAVIFIANPNNPTGNLVRAQALESFLDRVPERVLVVLDEAYIEFYRGTNCQRLNYLVRYPNLLVSRTLSKVYGLAGLRVGYSASSPQIADVLNRVRQPFNVNSLALVAACAGWMTSSIWLKGGGWIAPVWELEQGLAELRLKWIPSRGNFLAVDLGRDAAPINAGLLRDGVIVRPIAGYDCPTFLRVSIGTEQENARFLEALRVVLDQ.

Lys228 is modified (N6-(pyridoxal phosphate)lysine).

This sequence belongs to the class-II pyridoxal-phosphate-dependent aminotransferase family. Histidinol-phosphate aminotransferase subfamily. As to quaternary structure, homodimer. Pyridoxal 5'-phosphate is required as a cofactor.

The enzyme catalyses L-histidinol phosphate + 2-oxoglutarate = 3-(imidazol-4-yl)-2-oxopropyl phosphate + L-glutamate. The protein operates within amino-acid biosynthesis; L-histidine biosynthesis; L-histidine from 5-phospho-alpha-D-ribose 1-diphosphate: step 7/9. The protein is Histidinol-phosphate aminotransferase of Stutzerimonas stutzeri (Pseudomonas stutzeri).